Reading from the N-terminus, the 282-residue chain is HTH-type transcriptional activator RhaR (282 aa).

Positions 179–277 (DKLITALAGS…GMTPVQWRHR (99 aa)) constitute an HTH araC/xylS-type domain. DNA-binding regions (H-T-H motif) lie at residues 196–217 (EKFCEQEQCSERALRQQFRTQT) and 244–267 (VSEVAMRCGFEDSNYFSVVFNREV).

As to quaternary structure, binds DNA as a dimer.

The protein resides in the cytoplasm. In terms of biological role, activates expression of the rhaSR operon in response to L-rhamnose. In Enterobacter sp. (strain 638), this protein is HTH-type transcriptional activator RhaR.